Here is a 360-residue protein sequence, read N- to C-terminus: Peptide chain release factor 1 (360 aa).

Gln235 is subject to N5-methylglutamine. Over residues 285–295 (RQAAEQADTRR) the composition is skewed to basic and acidic residues. Positions 285–309 (RQAAEQADTRRNLLGSGDRSDKIRT) are disordered.

This sequence belongs to the prokaryotic/mitochondrial release factor family. Methylated by PrmC. Methylation increases the termination efficiency of RF1.

It is found in the cytoplasm. Its function is as follows. Peptide chain release factor 1 directs the termination of translation in response to the peptide chain termination codons UAG and UAA. The polypeptide is Peptide chain release factor 1 (Actinobacillus pleuropneumoniae serotype 7 (strain AP76)).